A 660-amino-acid polypeptide reads, in one-letter code: Polycomb protein SCMH1 (660 aa).

2 MBT repeats span residues phenylalanine 28–proline 126 and serine 134–proline 235. Residues glutamine 233–aspartate 345 are disordered. 2 stretches are compositionally biased toward basic residues: residues arginine 273–threonine 284 and phenylalanine 305–arginine 320. A compositionally biased stretch (low complexity) spans proline 330–proline 343. Positions tryptophan 593–glycine 658 constitute an SAM domain.

The protein belongs to the SCM family. Interacts with the SAM domain of PHC1 via its SAM domain in vitro. Associates with a PRC1-like complex. Strongly expressed in heart, muscle and pancreas. Weakly expressed in brain, placenta, lung, liver and kidney.

The protein localises to the nucleus. In terms of biological role, associates with Polycomb group (PcG) multiprotein complexes; the complex class is required to maintain the transcriptionally repressive state of some genes. The chain is Polycomb protein SCMH1 from Homo sapiens (Human).